Reading from the N-terminus, the 209-residue chain is Large ribosomal subunit protein uL3 (209 aa).

Residues 113-155 form a disordered region; it reads TSRGHGYQGNIKRHHQSRGPETHGSRYHRIPGSMGSIINRVPK.

The protein belongs to the universal ribosomal protein uL3 family. In terms of assembly, part of the 50S ribosomal subunit. Forms a cluster with proteins L14 and L19.

Functionally, one of the primary rRNA binding proteins, it binds directly near the 3'-end of the 23S rRNA, where it nucleates assembly of the 50S subunit. This chain is Large ribosomal subunit protein uL3, found in Lactobacillus delbrueckii subsp. bulgaricus (strain ATCC 11842 / DSM 20081 / BCRC 10696 / JCM 1002 / NBRC 13953 / NCIMB 11778 / NCTC 12712 / WDCM 00102 / Lb 14).